A 467-amino-acid polypeptide reads, in one-letter code: Argininosuccinate lyase (467 aa).

The protein belongs to the lyase 1 family. Argininosuccinate lyase subfamily.

It is found in the cytoplasm. It carries out the reaction 2-(N(omega)-L-arginino)succinate = fumarate + L-arginine. The protein operates within amino-acid biosynthesis; L-arginine biosynthesis; L-arginine from L-ornithine and carbamoyl phosphate: step 3/3. In Rhizobium etli (strain ATCC 51251 / DSM 11541 / JCM 21823 / NBRC 15573 / CFN 42), this protein is Argininosuccinate lyase.